Consider the following 1407-residue polypeptide: DNA-directed RNA polymerase subunit beta' (1407 aa).

Positions 70, 72, 85, and 88 each coordinate Zn(2+). Residues D460, D462, and D464 each contribute to the Mg(2+) site. Zn(2+) contacts are provided by C814, C888, C895, and C898.

The protein belongs to the RNA polymerase beta' chain family. In terms of assembly, the RNAP catalytic core consists of 2 alpha, 1 beta, 1 beta' and 1 omega subunit. When a sigma factor is associated with the core the holoenzyme is formed, which can initiate transcription. Requires Mg(2+) as cofactor. Zn(2+) is required as a cofactor.

The enzyme catalyses RNA(n) + a ribonucleoside 5'-triphosphate = RNA(n+1) + diphosphate. DNA-dependent RNA polymerase catalyzes the transcription of DNA into RNA using the four ribonucleoside triphosphates as substrates. The chain is DNA-directed RNA polymerase subunit beta' from Cronobacter sakazakii (strain ATCC BAA-894) (Enterobacter sakazakii).